We begin with the raw amino-acid sequence, 91 residues long: Small ribosomal subunit protein bS18 (91 aa).

This sequence belongs to the bacterial ribosomal protein bS18 family. As to quaternary structure, part of the 30S ribosomal subunit. Forms a tight heterodimer with protein bS6.

In terms of biological role, binds as a heterodimer with protein bS6 to the central domain of the 16S rRNA, where it helps stabilize the platform of the 30S subunit. The sequence is that of Small ribosomal subunit protein bS18 from Burkholderia lata (strain ATCC 17760 / DSM 23089 / LMG 22485 / NCIMB 9086 / R18194 / 383).